A 643-amino-acid chain; its full sequence is MEKSSSCESLGAQLPAARLPSEDSLSSASTSHSENSVHTKSASAISSDSISTSADNFSPDLRVLREANKLAEMEEPALLPGENIKDMAKDVTYICPFTGAVRGTLTVTSYRLYFKSMERDPPFVLDASLGVISRVEKIGGASSRGENSYGLETVCKDIRNLRFAHKPEGRTRRSIFENLMKYAFPVSNGLPLFAFEYKEVFPENGWKLYDPLLEYRRQGIPNESWRITKINERYELCDTYPALLVVPANIPDEELKRVASFRSRGRIPVLSWIHPESQATVTRCSQPMVGVSGKRSKEDEKYLQAIMDSNAQSHKIFIFDARPSVNAVANKAKGGGYESEDAYQNAELVFLDIHNIHVMRESLRKLKEIVYPTIEETHWLSNLESTHWLEHIKLILAGALRIADKVESGKTSVVVHCSDGWDRTAQLTSLAMLMLDGYYRTIRGFEVLVEKEWLSFGHRFQLRVGHGDKNHADADRSPVFLQFIDCVWQMTRQFPTAFEFNEYFLITILDHLYSCLFGTFLCNSEQQRGKENLPKKTVSLWSYINSQLEDFTNPLYGSYSNHVLYPVASMRHLELWVGYYIRWNPRMKPQEPIHSRYKELLAKRAELQRKVEELQREISNRSTSSSERASSPAQCVTPVQTVV.

Residues M1–T52 form a disordered region. 2 positions are modified to phosphoserine: S6 and S9. The segment covering D23 to K40 has biased composition (polar residues). The span at S41 to T52 shows a compositional bias: low complexity. S58 is subject to Phosphoserine. One can recognise a GRAM domain in the interval N68–G139. Residues G205–Y580 form the Myotubularin phosphatase domain. A 1,2-diacyl-sn-glycero-3-phospho-(1D-myo-inositol-3,5-bisphosphate)-binding residues include N330, N355, and I356. A 1,2-diacyl-sn-glycero-3-phospho-(1D-myo-inositol-3-phosphate)-binding residues include N330, N355, and I356. The active-site Phosphocysteine intermediate is the C417. 8 residues coordinate a 1,2-diacyl-sn-glycero-3-phospho-(1D-myo-inositol-3,5-bisphosphate): S418, D419, G420, W421, D422, R423, R459, and R463. S418, D419, G420, W421, D422, and R423 together coordinate a 1,2-diacyl-sn-glycero-3-phospho-(1D-myo-inositol-3-phosphate). Residue R463 coordinates a 1,2-diacyl-sn-glycero-3-phospho-(1D-myo-inositol-3-phosphate). Residues I593–E627 are a coiled coil. Residues L614–V643 form a disordered region. Over residues N620–S631 the composition is skewed to low complexity. Residues P632–V643 show a composition bias toward polar residues.

The protein belongs to the protein-tyrosine phosphatase family. Non-receptor class myotubularin subfamily. In terms of assembly, homodimer (via coiled-coil domain). Heterotetramer consisting of one MTMR2 dimer and one SBF2/MTMR13 dimer; specifically in peripheral nerves stabilizes SBF2/MTMR13 at the membranes and increases MTMR2 catalytic activity towards phosphatidylinositol 3,5-bisphosphate and to a lesser extent towards phosphatidylinositol 3-phosphate. Heterodimer with SBF1/MTMR5; acts as an adapter for the phosphatase MTMR2 to regulate MTMR2 catalytic activity and subcellular location. Heterodimer with MTMR12. Phosphorylation at Ser-58 decreases MTMR2 localization to endocytic vesicular structures. As to expression, expressed in sciatic nerve and in Schwann cells (at protein level). Detected in adult dorsal root ganglia, neurons of the central nervous system, motor neurons, cell soma and neurites of sensory neurons, olfactory bulb, cerebellum and hippocampus.

The protein resides in the cytoplasm. Its subcellular location is the early endosome membrane. The protein localises to the perinuclear region. It localises to the cell projection. It is found in the axon. The protein resides in the endosome membrane. It carries out the reaction a 1,2-diacyl-sn-glycero-3-phospho-(1D-myo-inositol-3,5-bisphosphate) + H2O = a 1,2-diacyl-sn-glycero-3-phospho-(1D-myo-inositol-5-phosphate) + phosphate. The catalysed reaction is a 1,2-diacyl-sn-glycero-3-phospho-(1D-myo-inositol-3-phosphate) + H2O = a 1,2-diacyl-sn-glycero-3-phospho-(1D-myo-inositol) + phosphate. The enzyme catalyses 1,2-dioctanoyl-sn-glycero-3-phospho-(1-D-myo-inositol-3-phosphate) + H2O = 1,2-dioctanoyl-sn-glycero-3-phospho-(1D-myo-inositol) + phosphate. It catalyses the reaction 1,2-dioctanoyl-sn-glycero-3-phospho-(1D-myo-inositol-3,5-bisphosphate) + H2O = 1,2-dioctanoyl-sn-glycero-3-phospho-(1D-myo-inositol-5-phosphate) + phosphate. Lipid phosphatase that specifically dephosphorylates the D-3 position of phosphatidylinositol 3-phosphate and phosphatidylinositol 3,5-bisphosphate, generating phosphatidylinositol and phosphatidylinositol 5-phosphate. Regulates the level of these phosphoinositides critical for various biological processes including autophagy initiation and autophagosome maturation. In Mus musculus (Mouse), this protein is Phosphatidylinositol-3,5-bisphosphate 3-phosphatase MTMR2.